Consider the following 99-residue polypeptide: UPF0235 protein Cag_0319 (99 aa).

It belongs to the UPF0235 family.

The sequence is that of UPF0235 protein Cag_0319 from Chlorobium chlorochromatii (strain CaD3).